Consider the following 180-residue polypeptide: Crossover junction endodeoxyribonuclease RuvC (180 aa).

Catalysis depends on residues Asp-7, Glu-66, and Asp-138. Residues Asp-7, Glu-66, and Asp-138 each contribute to the Mg(2+) site.

This sequence belongs to the RuvC family. Homodimer which binds Holliday junction (HJ) DNA. The HJ becomes 2-fold symmetrical on binding to RuvC with unstacked arms; it has a different conformation from HJ DNA in complex with RuvA. In the full resolvosome a probable DNA-RuvA(4)-RuvB(12)-RuvC(2) complex forms which resolves the HJ. The cofactor is Mg(2+).

The protein localises to the cytoplasm. The catalysed reaction is Endonucleolytic cleavage at a junction such as a reciprocal single-stranded crossover between two homologous DNA duplexes (Holliday junction).. The RuvA-RuvB-RuvC complex processes Holliday junction (HJ) DNA during genetic recombination and DNA repair. Endonuclease that resolves HJ intermediates. Cleaves cruciform DNA by making single-stranded nicks across the HJ at symmetrical positions within the homologous arms, yielding a 5'-phosphate and a 3'-hydroxyl group; requires a central core of homology in the junction. The consensus cleavage sequence is 5'-(A/T)TT(C/G)-3'. Cleavage occurs on the 3'-side of the TT dinucleotide at the point of strand exchange. HJ branch migration catalyzed by RuvA-RuvB allows RuvC to scan DNA until it finds its consensus sequence, where it cleaves and resolves the cruciform DNA. The protein is Crossover junction endodeoxyribonuclease RuvC of Paraburkholderia xenovorans (strain LB400).